Here is a 155-residue protein sequence, read N- to C-terminus: Riboflavin kinase (155 aa).

ATP contacts are provided by G15, K21, T27, and N29. 2 residues coordinate Mg(2+): T27 and N29. E79 acts as the Nucleophile in catalysis. Positions 82, 84, and 91 each coordinate ATP. R104, K107, and F109 together coordinate FMN.

Monomer. Directly interacts with TNFRSF1A death domain; this interaction may be supported by TRADD. In the absence of TNFRSF1A, interacts with TRADD. Independently of TNFRSF1A, interacts with the NADPH oxidase subunit CYBA. The cofactor is Zn(2+). It depends on Mg(2+) as a cofactor.

It is found in the cytoplasm. It catalyses the reaction riboflavin + ATP = FMN + ADP + H(+). Its pathway is cofactor biosynthesis; FMN biosynthesis; FMN from riboflavin (ATP route): step 1/1. In terms of biological role, catalyzes the phosphorylation of riboflavin (vitamin B2) to form flavin-mononucleotide (FMN), hence rate-limiting enzyme in the synthesis of FAD. Essential for TNF-induced reactive oxygen species (ROS) production. Through its interaction with both TNFRSF1A and CYBA, physically and functionally couples TNFRSF1A to NADPH oxidase. TNF-activation of RFK may enhance the incorporation of FAD in NADPH oxidase, a critical step for the assembly and activation of NADPH oxidase. The protein is Riboflavin kinase (Rfk) of Mus musculus (Mouse).